Here is a 782-residue protein sequence, read N- to C-terminus: Endonuclease MutS2 (782 aa).

336–343 is an ATP binding site; it reads GPNTGGKT. One can recognise a Smr domain in the interval 707 to 782; that stretch reads LDLRGYRYEE…GFGVTVAELK (76 aa).

This sequence belongs to the DNA mismatch repair MutS family. MutS2 subfamily. As to quaternary structure, homodimer. Binds to stalled ribosomes, contacting rRNA.

Its function is as follows. Endonuclease that is involved in the suppression of homologous recombination and thus may have a key role in the control of bacterial genetic diversity. In terms of biological role, acts as a ribosome collision sensor, splitting the ribosome into its 2 subunits. Detects stalled/collided 70S ribosomes which it binds and splits by an ATP-hydrolysis driven conformational change. Acts upstream of the ribosome quality control system (RQC), a ribosome-associated complex that mediates the extraction of incompletely synthesized nascent chains from stalled ribosomes and their subsequent degradation. Probably generates substrates for RQC. This is Endonuclease MutS2 from Staphylococcus epidermidis (strain ATCC 35984 / DSM 28319 / BCRC 17069 / CCUG 31568 / BM 3577 / RP62A).